The sequence spans 394 residues: Elongation factor Tu 1 (394 aa).

A tr-type G domain is found at 10–204; it reads KPHVNVGTIG…FLDSYIPEPE (195 aa). The interval 19–26 is G1; the sequence is GHVDHGKT. 19–26 is a binding site for GTP; that stretch reads GHVDHGKT. Mg(2+) is bound at residue Thr-26. The G2 stretch occupies residues 60 to 64; the sequence is GITIN. A G3 region spans residues 81–84; the sequence is DCPG. GTP-binding positions include 81-85 and 136-139; these read DCPGH and NKCD. The G4 stretch occupies residues 136-139; sequence NKCD. The interval 174–176 is G5; it reads SAL.

This sequence belongs to the TRAFAC class translation factor GTPase superfamily. Classic translation factor GTPase family. EF-Tu/EF-1A subfamily. In terms of assembly, monomer.

The protein resides in the cytoplasm. It carries out the reaction GTP + H2O = GDP + phosphate + H(+). Its function is as follows. GTP hydrolase that promotes the GTP-dependent binding of aminoacyl-tRNA to the A-site of ribosomes during protein biosynthesis. The protein is Elongation factor Tu 1 of Shigella sonnei (strain Ss046).